A 303-amino-acid chain; its full sequence is Glycosyltransferase AglJ (303 aa).

2 helical membrane passes run F230–V250 and V263–V283.

Belongs to the glycosyltransferase 2 family.

The protein resides in the cell membrane. It participates in cell surface structure biogenesis; S-layer biogenesis. Functionally, involved in the assembly of a N-linked pentasaccharide that decorates the S-layer glycoprotein and flagellins. Adds the first hexose subunit of the pentasaccharide to the dolichol phosphate carrier. This is Glycosyltransferase AglJ (aglJ) from Haloferax volcanii (strain ATCC 29605 / DSM 3757 / JCM 8879 / NBRC 14742 / NCIMB 2012 / VKM B-1768 / DS2) (Halobacterium volcanii).